The chain runs to 602 residues: SAGA complex subunit SPT8 (602 aa).

The segment at methionine 1 to alanine 141 is disordered. 2 stretches are compositionally biased toward acidic residues: residues valine 14 to methionine 23 and glutamate 36 to aspartate 75. A Phosphothreonine modification is found at threonine 85. Phosphoserine is present on residues serine 108, serine 123, and serine 131. WD repeat units lie at residues proline 173 to leucine 212 and glycine 305 to lysine 346. The interval valine 366–isoleucine 418 is disordered. The span at asparagine 378–lysine 395 shows a compositional bias: acidic residues. WD repeat units follow at residues lysine 415 to leucine 454, serine 506 to asparagine 544, and histidine 560 to aspartate 600. A Phosphoserine modification is found at serine 451.

The protein belongs to the WD repeat SPT8 family. In terms of assembly, component of the 1.8 MDa SAGA (Spt-Ada-Gcn5 acetyltransferase) complex, which is composed of 19 subunits TRA1, SPT7, TAF5, NGG1/ADA3, SGF73, SPT20/ADA5, SPT8, TAF12, TAF6, HFI1/ADA1, UBP8, GCN5, ADA2, SPT3, SGF29, TAF10, TAF9, SGF11 and SUS1. The SAGA complex is composed of 4 modules, namely the HAT (histone acetyltransferase) module (GCN5, ADA2, NGG1/ADA3 and SGF29), the DUB (deubiquitinating) module (UBP8, SGF11, SGF73 and SUS1), the core or TAF (TBP-associated factor) module (TAF5, TAF6, TAF9, TAF10 and TAF12), and the Tra1 or SPT (Suppressor of Ty) module (TRA1, HFI1/ADA1, SPT3, SPT7, SPT8 and SPT20/ADA5). The Tra1/SPT module binds activators, the core module recruits TBP (TATA-binding protein), the HAT module contains the histone H3 acetyltransferase GCN5, and the DUB module comprises the histone H2B deubiquitinase UBP8.

The protein resides in the nucleus. In terms of biological role, component of the transcription coactivator SAGA complex. SAGA acts as a general cofactor required for essentially all RNA polymerase II transcription. At the promoters, SAGA is required for transcription pre-initiation complex (PIC) recruitment. It influences RNA polymerase II transcriptional activity through different activities such as TBP interaction (via core/TAF module) and promoter selectivity, interaction with transcription activators (via Tra1/SPT module), and chromatin modification through histone acetylation (via HAT module) and deubiquitination (via DUB module). SAGA preferentially acetylates histones H3 (to form H3K9ac, H3K14ac, H3K18ac and H3K23ac) and H2B and deubiquitinates histone H2B. SAGA interacts with DNA via upstream activating sequences (UASs). During SAGA-mediated transcriptional inhibition, SPT3 and SPT8 prevent binding of TBP to the TATA box. In Saccharomyces cerevisiae (strain ATCC 204508 / S288c) (Baker's yeast), this protein is SAGA complex subunit SPT8 (SPT8).